Consider the following 557-residue polypeptide: CTP synthase (557 aa).

The tract at residues 1–270 is amidoligase domain; that stretch reads MTKYVFVTGG…DAIICEELKL (270 aa). Residue Ser13 coordinates CTP. Ser13 serves as a coordination point for UTP. ATP is bound by residues 14 to 19 and Asp71; that span reads SLGKGI. Residues Asp71 and Glu144 each coordinate Mg(2+). CTP is bound by residues 151 to 153, 191 to 196, and Lys227; these read DIE and KTKPTQ. Residues 191 to 196 and Lys227 contribute to the UTP site; that span reads KTKPTQ. In terms of domain architecture, Glutamine amidotransferase type-1 spans 295–547; that stretch reads TIGMVGKYVD…VEAALAHHEA (253 aa). Gly356 lines the L-glutamine pocket. Cys383 acts as the Nucleophile; for glutamine hydrolysis in catalysis. Residues 384–387, Glu407, and Arg473 each bind L-glutamine; that span reads LGMQ. Residues His520 and Glu522 contribute to the active site.

Belongs to the CTP synthase family. As to quaternary structure, homotetramer.

It catalyses the reaction UTP + L-glutamine + ATP + H2O = CTP + L-glutamate + ADP + phosphate + 2 H(+). The enzyme catalyses L-glutamine + H2O = L-glutamate + NH4(+). The catalysed reaction is UTP + NH4(+) + ATP = CTP + ADP + phosphate + 2 H(+). It functions in the pathway pyrimidine metabolism; CTP biosynthesis via de novo pathway; CTP from UDP: step 2/2. Its activity is regulated as follows. Allosterically activated by GTP, when glutamine is the substrate; GTP has no effect on the reaction when ammonia is the substrate. The allosteric effector GTP functions by stabilizing the protein conformation that binds the tetrahedral intermediate(s) formed during glutamine hydrolysis. Inhibited by the product CTP, via allosteric rather than competitive inhibition. Its function is as follows. Catalyzes the ATP-dependent amination of UTP to CTP with either L-glutamine or ammonia as the source of nitrogen. Regulates intracellular CTP levels through interactions with the four ribonucleotide triphosphates. The sequence is that of CTP synthase from Paraburkholderia phytofirmans (strain DSM 17436 / LMG 22146 / PsJN) (Burkholderia phytofirmans).